We begin with the raw amino-acid sequence, 582 residues long: Isopropyl malate synthase AMT7 (582 aa).

One can recognise a Pyruvate carboxyltransferase domain in the interval 61 to 341 (PVLFSTDLRD…EPGIDLSRLD (281 aa)).

This sequence belongs to the alpha-IPM synthase/homocitrate synthase family. LeuA type 2 subfamily.

The enzyme catalyses 3-methyl-2-oxobutanoate + acetyl-CoA + H2O = (2S)-2-isopropylmalate + CoA + H(+). Its pathway is mycotoxin biosynthesis. In terms of biological role, isopropyl malate synthase; part of the gene clusters that mediate the biosynthesis of AM-toxins, host-selective toxins (HSTs) causing Alternaria blotch on apple, a worldwide distributed disease. AM-toxins are cyclic depsipeptides containing the 3 residues 2-hydroxy-isovaleric acid (2-HIV), dehydroalanine, L-alanine which are common for all 3 AM-toxins I to III. The fourth precursor is L-alpha-amino-methoxyphenyl-valeric acid (L-Amv) for AM-toxin I, L-alpha-amino-phenyl-valeric acid (L-Apv) for AM-toxin II, and L-alpha-amino-hydroxyphenyl-valeric acid (L-Ahv) for AM-toxin III. AM-toxins have two target sites for affecting susceptible apple cells; they cause invagination of the plasma membrane and electrolyte loss and chloroplast disorganization. The non-ribosomal peptide synthetase AMT1 contains 4 catalytic modules and is responsible for activation of each residue in AM-toxin. The aldo-keto reductase AMT2 catalyzes the conversion of 2-keto-isovaleric acid (2-KIV) to 2-hydroxy-isovaleric acid (2-HIV), one of the precursor residues incorporated by AMT1 during AM-toxin biosynthesis, by reduction of its ketone to an alcohol. The cytochrome P450 monooxygenase AMT3 and the thioesterase AMT4 are also important for AM-toxin production, but their exact function within the AM-toxin biosynthesis are not known yet. Up to 21 proteins (including AMT1 to AMT4) are predicted to be involved in AM-toxin biosynthesis since their expression ishighly up-regulated in AM-toxin-producing cultures. This is Isopropyl malate synthase AMT7 from Alternaria alternata (Alternaria rot fungus).